Here is a 23-residue protein sequence, read N- to C-terminus: Toxin Acra2 (23 aa).

One can recognise an LCN-type CS-alpha/beta domain in the interval 2-23 (KDGYIVDSNGCAPECFPTNXGC).

Contains 4 disulfide bonds. As to expression, expressed by the venom gland.

It is found in the secreted. In terms of biological role, excitatory insect toxins induce a spastic paralysis. They bind voltage-independently at site-4 of sodium channels (Nav) and shift the voltage of activation toward more negative potentials thereby affecting sodium channel activation and promoting spontaneous and repetitive firing. Is lethal to mice. Is about 1% of the total protein in the venom. The sequence is that of Toxin Acra2 from Androctonus crassicauda (Arabian fat-tailed scorpion).